We begin with the raw amino-acid sequence, 252 residues long: 1-(5-phosphoribosyl)-5-[(5-phosphoribosylamino)methylideneamino] imidazole-4-carboxamide isomerase (252 aa).

Asp8 functions as the Proton acceptor in the catalytic mechanism. Asp129 (proton donor) is an active-site residue.

Belongs to the HisA/HisF family.

Its subcellular location is the cytoplasm. It catalyses the reaction 1-(5-phospho-beta-D-ribosyl)-5-[(5-phospho-beta-D-ribosylamino)methylideneamino]imidazole-4-carboxamide = 5-[(5-phospho-1-deoxy-D-ribulos-1-ylimino)methylamino]-1-(5-phospho-beta-D-ribosyl)imidazole-4-carboxamide. Its pathway is amino-acid biosynthesis; L-histidine biosynthesis; L-histidine from 5-phospho-alpha-D-ribose 1-diphosphate: step 4/9. The protein is 1-(5-phosphoribosyl)-5-[(5-phosphoribosylamino)methylideneamino] imidazole-4-carboxamide isomerase of Synechococcus sp. (strain RCC307).